The sequence spans 168 residues: Ribosome-binding factor A (168 aa).

The span at 125-138 (RVREGAKHAGDSDP) shows a compositional bias: basic and acidic residues. Residues 125–168 (RVREGAKHAGDSDPYRVLGEGDLEGPATGGPDVEDEGGANSHDR) are disordered.

It belongs to the RbfA family. As to quaternary structure, monomer. Binds 30S ribosomal subunits, but not 50S ribosomal subunits or 70S ribosomes.

It is found in the cytoplasm. Its function is as follows. One of several proteins that assist in the late maturation steps of the functional core of the 30S ribosomal subunit. Associates with free 30S ribosomal subunits (but not with 30S subunits that are part of 70S ribosomes or polysomes). Required for efficient processing of 16S rRNA. May interact with the 5'-terminal helix region of 16S rRNA. The polypeptide is Ribosome-binding factor A (Mycolicibacterium gilvum (strain PYR-GCK) (Mycobacterium gilvum (strain PYR-GCK))).